We begin with the raw amino-acid sequence, 321 residues long: tRNA U34 carboxymethyltransferase (321 aa).

Carboxy-S-adenosyl-L-methionine is bound by residues Lys-90, Trp-104, Lys-109, Gly-129, 151-153 (DPT), 180-181 (IE), Met-195, Tyr-199, and Arg-314.

It belongs to the class I-like SAM-binding methyltransferase superfamily. CmoB family. Homotetramer.

It carries out the reaction carboxy-S-adenosyl-L-methionine + 5-hydroxyuridine(34) in tRNA = 5-carboxymethoxyuridine(34) in tRNA + S-adenosyl-L-homocysteine + H(+). In terms of biological role, catalyzes carboxymethyl transfer from carboxy-S-adenosyl-L-methionine (Cx-SAM) to 5-hydroxyuridine (ho5U) to form 5-carboxymethoxyuridine (cmo5U) at position 34 in tRNAs. The protein is tRNA U34 carboxymethyltransferase of Pasteurella multocida (strain Pm70).